Reading from the N-terminus, the 438-residue chain is Putative metabolite transport protein HI_0281 (438 aa).

The Cytoplasmic portion of the chain corresponds to methionine 1–methionine 17. A helical membrane pass occupies residues valine 18–phenylalanine 38. Topologically, residues asparagine 39–aspartate 52 are periplasmic. Residues leucine 53–phenylalanine 73 form a helical membrane-spanning segment. The Cytoplasmic portion of the chain corresponds to glycine 74 to threonine 85. Residues leucine 86–tyrosine 106 form a helical membrane-spanning segment. The Periplasmic portion of the chain corresponds to alanine 107 to isoleucine 115. Residues leucine 116–alanine 136 form a helical membrane-spanning segment. The Cytoplasmic portion of the chain corresponds to leucine 137–glutamine 156. The chain crosses the membrane as a helical span at residues leucine 157–leucine 177. Residues glycine 178–alanine 181 lie on the Periplasmic side of the membrane. Residues leucine 182 to leucine 202 form a helical membrane-spanning segment. Residues tyrosine 203–methionine 239 are Cytoplasmic-facing. A helical transmembrane segment spans residues valine 240–alanine 260. The Periplasmic segment spans residues glutamine 261–phenylalanine 286. Residues threonine 287 to tyrosine 307 traverse the membrane as a helical segment. The Cytoplasmic portion of the chain corresponds to alanine 308–arginine 314. A helical transmembrane segment spans residues lysine 315–glutamate 336. Over asparagine 337–serine 342 the chain is Periplasmic. Residues valine 343–alanine 363 form a helical membrane-spanning segment. Over leucine 364 to glycine 377 the chain is Cytoplasmic. The chain crosses the membrane as a helical span at residues alanine 378–leucine 398. Topologically, residues lysine 399–glycine 405 are periplasmic. Residues valine 406–alanine 426 traverse the membrane as a helical segment. The Cytoplasmic segment spans residues serine 427–isoleucine 438.

The protein belongs to the major facilitator superfamily. Sugar transporter (TC 2.A.1.1) family.

The protein localises to the cell inner membrane. The polypeptide is Putative metabolite transport protein HI_0281 (Haemophilus influenzae (strain ATCC 51907 / DSM 11121 / KW20 / Rd)).